The following is a 376-amino-acid chain: N-acetyldiaminopimelate deacetylase (376 aa).

The active site involves D69. E128 acts as the Proton acceptor in catalysis.

Belongs to the peptidase M20A family. N-acetyldiaminopimelate deacetylase subfamily.

It carries out the reaction N-acetyl-(2S,6S)-2,6-diaminopimelate + H2O = (2S,6S)-2,6-diaminopimelate + acetate. It participates in amino-acid biosynthesis; L-lysine biosynthesis via DAP pathway; LL-2,6-diaminopimelate from (S)-tetrahydrodipicolinate (acetylase route): step 3/3. In terms of biological role, catalyzes the conversion of N-acetyl-diaminopimelate to diaminopimelate and acetate. The protein is N-acetyldiaminopimelate deacetylase of Streptococcus pneumoniae (strain JJA).